The sequence spans 705 residues: Prolyl endopeptidase (705 aa).

The signal sequence occupies residues 1–20; it reads MKYNKLSVAVAAFAFAAVSA. Active-site charge relay system residues include Ser556 and His675.

Belongs to the peptidase S9A family. As to quaternary structure, monomer.

The protein localises to the periplasm. It carries out the reaction Hydrolysis of Pro-|-Xaa &gt;&gt; Ala-|-Xaa in oligopeptides.. Functionally, cleaves peptide bonds on the C-terminal side of prolyl residues within peptides that are up to approximately 30 amino acids long. Has an absolute requirement for an X-Pro bond in the trans configuration immediately preceding the Pro-Y scissible bond. The chain is Prolyl endopeptidase (f1pep1) from Elizabethkingia meningoseptica (Chryseobacterium meningosepticum).